The sequence spans 35 residues: Mu/omega-theraphotoxin-Tap1a (35 aa).

Disulfide bonds link Cys-3–Cys-18, Cys-10–Cys-23, and Cys-17–Cys-30.

This sequence belongs to the neurotoxin 10 (Hwtx-1) family. 59 (Tltx) subfamily. Expressed by the venom gland.

The protein resides in the secreted. In terms of biological role, gating-modifier toxin that inhibits both sodium (Nav) and calcium (Cav3) channels by inducing hyperpolarizing shift in voltage-dependence of activation and steady state inactivation. Inhibits Nav1.1/SCN1A, Nav1.2/SCN2A, Nav1.3/SCN3A, Nav1.6/SCN6A, Nav1.7/SCN9A and Cav3.1/CACNA1G sodium and calcium channels at nanomolar concentrations (IC(50)=81-301 nM). Surprisingly, selectively slows fast inactivation of Nav1.3/SCN3A. Also shows moderate inhibition of Cav3.2/CACNA1H calcium channels (IC(50)=1233 nM). Ex vivo, nearly ablates neuronal mechanosensitivity in afferent fibers innervating the colon and the bladder. In vivo, in a mouse model of irritable bowel syndrome, intracolonic administration of the toxin reverses colonic mechanical hypersensitivity. The chain is Mu/omega-theraphotoxin-Tap1a from Theraphosa apophysis (Goliath pinkfoot tarantula).